Reading from the N-terminus, the 371-residue chain is Ferrochelatase (371 aa).

The Fe cation site is built by histidine 218 and glutamate 299.

This sequence belongs to the ferrochelatase family.

It is found in the cytoplasm. It catalyses the reaction heme b + 2 H(+) = protoporphyrin IX + Fe(2+). The protein operates within porphyrin-containing compound metabolism; protoheme biosynthesis; protoheme from protoporphyrin-IX: step 1/1. Its function is as follows. Catalyzes the ferrous insertion into protoporphyrin IX. This Cupriavidus necator (strain ATCC 17699 / DSM 428 / KCTC 22496 / NCIMB 10442 / H16 / Stanier 337) (Ralstonia eutropha) protein is Ferrochelatase.